A 310-amino-acid chain; its full sequence is Transcription initiation factor IIB (310 aa).

The segment at 9–41 (EKETKCPECGSDDLRGDYERAEIVCGKCGLVID) adopts a TFIIB-type zinc-finger fold. Residues Cys14, Cys17, Cys33, and Cys36 each contribute to the Zn(2+) site. A run of 2 repeats spans residues 127–210 (SELD…TREL) and 221–302 (DYVP…ELTE).

Belongs to the TFIIB family.

Functionally, stabilizes TBP binding to an archaeal box-A promoter. Also responsible for recruiting RNA polymerase II to the pre-initiation complex (DNA-TBP-TFIIB). The polypeptide is Transcription initiation factor IIB (Methanothermobacter thermautotrophicus (strain ATCC 29096 / DSM 1053 / JCM 10044 / NBRC 100330 / Delta H) (Methanobacterium thermoautotrophicum)).